A 419-amino-acid chain; its full sequence is Creatine kinase S-type, mitochondrial (419 aa).

Residues 1–39 constitute a mitochondrion transit peptide; the sequence is MASAFSKLLTGRNASLLFTTLGTSALTTGYLLNRQKVSA. Positions 40-64 are cardiolipin-binding; it reads DAREQHKLFPPSADYPDLRKHNNCM. Residues 46-132 form the Phosphagen kinase N-terminal domain; that stretch reads KLFPPSADYP…FDPVIKLRHN (87 aa). One can recognise a Phosphagen kinase C-terminal domain in the interval 159–401; it reads YVLSSRVRTG…NYLVDCEKKL (243 aa). ATP is bound by residues 162 to 166 and histidine 225; that span reads SSRVR. At tyrosine 255 the chain carries Phosphotyrosine. Residues arginine 270, arginine 326, 354–359, and aspartate 369 each bind ATP; that span reads RGTGGV. A Phosphothreonine modification is found at threonine 356.

This sequence belongs to the ATP:guanido phosphotransferase family. In terms of assembly, exists as an octamer composed of four CKMT2 homodimers.

Its subcellular location is the mitochondrion inner membrane. The enzyme catalyses creatine + ATP = N-phosphocreatine + ADP + H(+). Functionally, reversibly catalyzes the transfer of phosphate between ATP and various phosphogens (e.g. creatine phosphate). Creatine kinase isoenzymes play a central role in energy transduction in tissues with large, fluctuating energy demands, such as skeletal muscle, heart, brain and spermatozoa. This chain is Creatine kinase S-type, mitochondrial (Ckmt2), found in Mus musculus (Mouse).